Consider the following 469-residue polypeptide: MIPVRGFEGKTVAVFGLGRTGLTAARALIAGGAKVALWDEKPESRQAAVAEGLNVVDLTTSDWSDYAALMLSPGVPLTHPKPHWTVGKAKAAGVEVLGDIELFARTVNAAPEHKKPKIIAITGTNGKSTTTALIGHLCRQAGRDTRVGGNIGEGVLGLEDMHGGAVYVLELSSYQLDLTSSLKPDAVVLLNISPDHLDRHGGMDGYIAAKRRIFLNQGKGDTAIIGVDDPWCQQICTEITAANRRTIWPISAGKAMGRGVYALQGVLYDATGERVTEMADLLRARSLPGRHNWQNAAAAYAAAKAIGIPAHQAVDGLMSFPGLAHRMETVGKLGKVRFVNDSKATNADAARQAMSSYPKFYWIAGGVPKAGGIDDLVDLFPRVAGAYLIGQAAEDFGKTLEGKAPARQCGDIETAVAAAYADAVASGEEAVVLLSPACASFDQFADFEQRGEAFRAAVNGLGKPAAKRA.

123–129 (GTNGKST) is an ATP binding site.

It belongs to the MurCDEF family.

The protein localises to the cytoplasm. The enzyme catalyses UDP-N-acetyl-alpha-D-muramoyl-L-alanine + D-glutamate + ATP = UDP-N-acetyl-alpha-D-muramoyl-L-alanyl-D-glutamate + ADP + phosphate + H(+). Its pathway is cell wall biogenesis; peptidoglycan biosynthesis. Functionally, cell wall formation. Catalyzes the addition of glutamate to the nucleotide precursor UDP-N-acetylmuramoyl-L-alanine (UMA). This is UDP-N-acetylmuramoylalanine--D-glutamate ligase from Caulobacter sp. (strain K31).